A 565-amino-acid chain; its full sequence is Formate--tetrahydrofolate ligase (565 aa).

73–80 (TPAGEGKS) serves as a coordination point for ATP.

It belongs to the formate--tetrahydrofolate ligase family.

The enzyme catalyses (6S)-5,6,7,8-tetrahydrofolate + formate + ATP = (6R)-10-formyltetrahydrofolate + ADP + phosphate. It functions in the pathway one-carbon metabolism; tetrahydrofolate interconversion. This is Formate--tetrahydrofolate ligase from Arthrobacter sp. (strain FB24).